We begin with the raw amino-acid sequence, 2057 residues long: Protein TIC 214 (2057 aa).

A run of 4 helical transmembrane segments spans residues 13–33 (KIIN…AFSI), 62–82 (LIMG…HIAL), 158–178 (LFVT…CEFF), and 206–226 (SDYF…HSFG). Residues 248–340 (LILKGTDEEE…RVIQEKERKS (93 aa)) are a coiled coil. Basic residues predominate over residues 288-302 (NHLKKKKDRQKKQGT). 5 disordered regions span residues 288-316 (NHLK…NSNT), 614-807 (ETHT…EEKG), 890-910 (DEQT…NDRV), 1597-1634 (EEEE…TNND), and 1724-1817 (KKKN…KSLS). Basic and acidic residues-rich tracts occupy residues 621-657 (ATDK…KETK) and 665-702 (NTVD…KETK). Polar residues predominate over residues 704-713 (NASKETNTVN). 2 stretches are compositionally biased toward basic and acidic residues: residues 714 to 807 (KETK…EEKG) and 891 to 900 (EQTKREEKPK). The segment covering 1597–1619 (EEEEINPEEEINPEEEINPEEEI) has biased composition (acidic residues). Polar residues predominate over residues 1622–1634 (SSNQKTPIGTNND). Residues 1753 to 1817 (TNSEKKSKTN…ETDSEKKSLS (65 aa)) show a composition bias toward basic and acidic residues.

It belongs to the TIC214 family. In terms of assembly, part of the Tic complex.

The protein resides in the plastid. The protein localises to the chloroplast inner membrane. Its function is as follows. Involved in protein precursor import into chloroplasts. May be part of an intermediate translocation complex acting as a protein-conducting channel at the inner envelope. This chain is Protein TIC 214, found in Ipomoea purpurea (Common morning glory).